A 51-amino-acid chain; its full sequence is Large ribosomal subunit protein bL33 (51 aa).

This sequence belongs to the bacterial ribosomal protein bL33 family.

This Methylococcus capsulatus (strain ATCC 33009 / NCIMB 11132 / Bath) protein is Large ribosomal subunit protein bL33.